We begin with the raw amino-acid sequence, 271 residues long: Cobalt import ATP-binding protein CbiO (271 aa).

The region spanning 2-236 (LATSDLWFRY…TEAMEHAGLT (235 aa)) is the ABC transporter domain. 34-41 (GANGCGKS) contributes to the ATP binding site.

It belongs to the ABC transporter superfamily. Cobalt importer (TC 3.A.1.18.1) family. Forms an energy-coupling factor (ECF) transporter complex composed of an ATP-binding protein (A component, CbiO), a transmembrane protein (T component, CbiQ) and 2 possible substrate-capture proteins (S components, CbiM and CbiN) of unknown stoichimetry. Expression of just CbiMN in E.coli confers some cobalt uptake.

It is found in the cell inner membrane. It participates in cofactor biosynthesis; adenosylcobalamin biosynthesis. Part of the energy-coupling factor (ECF) transporter complex CbiMNOQ involved in cobalt import. The complex confers cobalt uptake upon expression in E.coli; can also transport nickel with a very low affinity. Presumably responsible for energy coupling to the transport system. This chain is Cobalt import ATP-binding protein CbiO, found in Salmonella typhimurium (strain LT2 / SGSC1412 / ATCC 700720).